Reading from the N-terminus, the 97-residue chain is RNA-binding protein Hfq (97 aa).

Residues 10–70 enclose the Sm domain; sequence DPFLNALRKE…ISTIVPARSV (61 aa). Positions 74–97 are disordered; the sequence is HENRPQAAPTSTLVQVETVQQPAE. Residues 81 to 97 are compositionally biased toward polar residues; that stretch reads APTSTLVQVETVQQPAE.

The protein belongs to the Hfq family. Homohexamer.

RNA chaperone that binds small regulatory RNA (sRNAs) and mRNAs to facilitate mRNA translational regulation in response to envelope stress, environmental stress and changes in metabolite concentrations. Also binds with high specificity to tRNAs. The polypeptide is RNA-binding protein Hfq (Neisseria meningitidis serogroup A / serotype 4A (strain DSM 15465 / Z2491)).